The primary structure comprises 279 residues: Lacto-N-neotetraose biosynthesis glycosyltransferase LgtB (279 aa).

The protein belongs to the glycosyltransferase 25 family.

It participates in glycan metabolism; lacto-N-neotetraose biosynthesis. It functions in the pathway bacterial outer membrane biogenesis; lipooligosaccharide biosynthesis. Its function is as follows. Adds the second galactose to the lacto-N-tetraose chain in lipooligosaccharide (LOS). This is Lacto-N-neotetraose biosynthesis glycosyltransferase LgtB (lgtB) from Neisseria meningitidis serogroup A / serotype 4A (strain DSM 15465 / Z2491).